The sequence spans 58 residues: MDVPYDLNSYIRVLKLASTPSTDEFLQVSKIAGAGILLIGFIGFLMFAIMSLLPGVGA.

A helical transmembrane segment spans residues 36–56 (ILLIGFIGFLMFAIMSLLPGV).

Belongs to the SecE/SEC61-gamma family. In terms of assembly, component of the Sec protein translocase complex. Heterotrimer consisting of SecY (alpha), SecG (beta) and SecE (gamma) subunits. The heterotrimers can form oligomers, although 1 heterotrimer is thought to be able to translocate proteins. Interacts with the ribosome. May interact with SecDF, and other proteins may be involved.

It localises to the cell membrane. Its function is as follows. Essential subunit of the Sec protein translocation channel SecYEG. Clamps together the 2 halves of SecY. May contact the channel plug during translocation. This is Protein translocase subunit SecE from Halorubrum lacusprofundi (strain ATCC 49239 / DSM 5036 / JCM 8891 / ACAM 34).